Consider the following 472-residue polypeptide: Replicative helicase loading/DNA remodeling protein DnaB (472 aa).

Residues 1-112 form a DDBH1 region; the sequence is MADYWKDVLP…ERLFIYELLP (112 aa). A DDBH2-1 region spans residues 210-302; sequence DLFLAGLSET…VHLREGEQPA (93 aa). The tract at residues 303 to 411 is DDBH2-2; it reads EEDSLDGKLI…RQYLEWAEGK (109 aa). Residues 415–472 are disordered; the sequence is SKRNQKVIREEKLPDWMTEKETASDSESGQQKLHPQDLEEQKKKMMEEMQKLKKYSAY. Basic and acidic residues-rich tracts occupy residues 421-437 and 448-465; these read VIRE…KETA and HPQD…EMQK.

This sequence belongs to the DnaB/DnaD family. As to quaternary structure, homotetramer. Also forms higher-order oligomers, can be induced by some ssDNA. The DNA replisome assembles sequentially on oriC in this order; DnaA, DnaD, DnaB, DnaI-DnaC helicase. In atomic force microscopy forms a square with a small central hole. Part of the replication restart primosome which assembles in this order; PriA, DnaD then DnaB. The preferred DNA substrate mimics an arrested DNA replication fork with unreplicated lagging strand. Interacts with DnaC, but probably not as a tetramer. Interacts with DnaD but no interaction with PriA was seen. Interacts with cell cycle regulator CcrZ. In terms of processing, in early growth phase only full-length protein is detected, during late growth and stationary phase full-length and C-terminally truncated proteins are seen (at protein level). Truncated protein is only seen in cytoplasmic fractions.

It localises to the cytoplasm. Its subcellular location is the cell membrane. In terms of biological role, helps DnaI load the DnaC replicative helicase onto single-stranded (ss)DNA. During DNA replication from the origin of replication (oriC) in the DNA replisome, DnaD is required after DnaA, before DnaB and before subsequent helicase DnaC loading. Component of the replication restart primosome, which reloads the replicative helicase on sites other than oriC. DnaB, DnaD and DnaI may also be required for a PriA-independent pathway of replication fork restart. DnaB and DnaD work together to allow DnaB access to ssDNA. DNA replication at oriC might originate on the inner face of the cell membrane; DnaB is essential for both replication initiation and cell membrane attachment of the origin region of the chromosome and plasmids. Weakly binds ssDNA, preferentially binds double-stranded (ds)DNA, and replication fork-like substrates. Remodels DNA, laterally compacts supercoiled plasmid and linear DNA, forms beads along the dsDNA. Together DnaB and DnaD form bipolar complexes on plasmid DNA. DnaB and DnaD are also required to load helicase on the repN plasmid origin of replication (oriN). In Bacillus subtilis (strain 168), this protein is Replicative helicase loading/DNA remodeling protein DnaB.